The chain runs to 107 residues: uncharacterized protein (107 aa).

2 helical membrane passes run 11–31 (CVNF…ILCI) and 58–78 (LFFL…LAFQ).

The protein localises to the mitochondrion membrane. This is an uncharacterized protein from Saccharomyces cerevisiae (strain ATCC 204508 / S288c) (Baker's yeast).